Reading from the N-terminus, the 782-residue chain is HHIP-like protein 1 (782 aa).

An N-terminal signal peptide occupies residues 1-19 (MARARAGALLALWVLGAAA). 4 disulfide bridges follow: cysteine 181/cysteine 521, cysteine 185/cysteine 528, cysteine 399/cysteine 417, and cysteine 484/cysteine 584. N-linked (GlcNAc...) asparagine glycosylation occurs at asparagine 234. The disordered stretch occupies residues 604–666 (EKFIPKTRST…RRGRLNSASR (63 aa)). The span at 610–623 (TRSTPRPTARAPTR) shows a compositional bias: low complexity. The span at 632-642 (AAPPAPTPRPA) shows a compositional bias: pro residues. An SRCR domain is found at 673 to 776 (VRLVRPAGLS…HDEDAGVVCS (104 aa)). 3 disulfides stabilise this stretch: cysteine 700-cysteine 765, cysteine 713-cysteine 775, and cysteine 745-cysteine 755.

This sequence belongs to the HHIP family.

The protein resides in the secreted. This Homo sapiens (Human) protein is HHIP-like protein 1 (HHIPL1).